Here is a 146-residue protein sequence, read N- to C-terminus: Large ribosomal subunit protein uL15 (146 aa).

Residues Met1–Gly55 form a disordered region. Gly residues predominate over residues Gly24–Val37.

It belongs to the universal ribosomal protein uL15 family. Part of the 50S ribosomal subunit.

Binds to the 23S rRNA. This chain is Large ribosomal subunit protein uL15, found in Psychrobacter cryohalolentis (strain ATCC BAA-1226 / DSM 17306 / VKM B-2378 / K5).